Consider the following 145-residue polypeptide: DNA polymerase epsilon subunit 3 (145 aa).

A2 bears the N-acetylalanine mark. The residue at position 83 (T83) is a Phosphothreonine. Positions L85–D144 form a coiled coil. Basic and acidic residues predominate over residues R93 to E123. A disordered region spans residues R93 to N145. Phosphoserine is present on S121. Positions E124 to N145 are enriched in acidic residues.

Component of the DNA polymerase epsilon complex consisting of four subunits: the catalytic subunit POLE and the accessory subunits POLE2, POLE3 and POLE4. Interaction with POLE4 is a prerequisite for further binding with POLE and POLE2. Heterodimer with CHRAC1; binds to DNA. Component of the CHRAC ISWI chromatin remodeling complex at least composed of SMARCA5/SNF2H, BAZ1A/ACF1, CHRAC1 and POLE3; the complex preferentially binds DNA through the CHRAC1-POLE3 heterodimer and possesses ATP-dependent nucleosome-remodeling activity. Within the complex, the heterodimer with CHRAC1 interacts with SMARCA5/SNF2H; the interaction is direct and enhances nucleosome sliding activity by the SMARCA5/SNF2H and BAZ1A/ACF1 interaction. Within the complex, the heterodimer with CHRAC1 interacts with BAZ1A/ACF1; the interactions are direct.

The protein resides in the nucleus. Its function is as follows. Accessory component of the DNA polymerase epsilon complex. Participates in DNA repair and in chromosomal DNA replication. Forms a complex with CHRAC1 and binds naked DNA, which is then incorporated into chromatin, aided by the nucleosome-remodeling activity of ISWI/SNF2H and ACF1. Does not enhance nucleosome sliding activity of the ACF-5 ISWI chromatin remodeling complex. The sequence is that of DNA polymerase epsilon subunit 3 (Pole3) from Rattus norvegicus (Rat).